A 214-amino-acid chain; its full sequence is Thiamine import ATP-binding protein ThiQ (214 aa).

One can recognise an ABC transporter domain in the interval Ile2 to Ile212. Gly31–Ser38 serves as a coordination point for ATP.

Belongs to the ABC transporter superfamily. Thiamine importer (TC 3.A.1.19.1) family. As to quaternary structure, the complex is composed of two ATP-binding proteins (ThiQ), two transmembrane proteins (ThiP) and a solute-binding protein (ThiB).

Its subcellular location is the cell inner membrane. The enzyme catalyses thiamine(out) + ATP + H2O = thiamine(in) + ADP + phosphate + H(+). Part of the ABC transporter complex ThiBPQ involved in thiamine import. Responsible for energy coupling to the transport system. This chain is Thiamine import ATP-binding protein ThiQ, found in Histophilus somni (strain 129Pt) (Haemophilus somnus).